Here is a 266-residue protein sequence, read N- to C-terminus: MVQRLSLMATIADDDFPLFKTSINILTGSPAVVYANLMVVWKPNPNYEVDNLNSKNELVEPTRMTTATSIPLELILNDPVSKNNGVDSDEILNTMKEQEFPIKQEQLFDMINNPSNNTINWTLTTADIPAAGSNRKVSMQAIQEATIVHQAGNNPTLANVMAELGYSFDYMYVTVGVRFVHKRDVIIHCHKVWDIAEDNIIQVTKGGYVVHTFVTVNRATDIERLNLAEANLLSLQRDLSGYLDFKVPDRKSMDSRTNLTQKDITL.

The protein belongs to the Mediator complex subunit 18 family. Component of the Mediator complex.

Its subcellular location is the nucleus. Its function is as follows. Component of the Mediator complex, a coactivator involved in the regulated transcription of nearly all RNA polymerase II-dependent genes. Mediator functions as a bridge to convey information from gene-specific regulatory proteins to the basal RNA polymerase II transcription machinery. Mediator is recruited to promoters by direct interactions with regulatory proteins and serves as a scaffold for the assembly of a functional preinitiation complex with RNA polymerase II and the general transcription factors. This Candida glabrata (strain ATCC 2001 / BCRC 20586 / JCM 3761 / NBRC 0622 / NRRL Y-65 / CBS 138) (Yeast) protein is Mediator of RNA polymerase II transcription subunit 18 (SRB5).